The primary structure comprises 267 residues: MTYFEAFFLALLQGFTEFLPISSSAHLILPSAILGWPDQGLAFDVAVHVGTLAAVVIYFRKEVVTLLTAWVGSIVKKEHNKESNLAWLIVLATIPAALFGLLFKDFIEIYLRSAWVIAATTIVFGLLLWWVDKNATLAKDEYQMTWKKALFLGIAQAMAMIPGTSRSGITITAALYLGFTREAAARFSFLMSIPIITLAGSYLGLKLAMSDISIHLGLLSTGVIVSFISAYICIHFFLKLISSMGMMPFVIYRILLGSSLLVWLALH.

8 consecutive transmembrane segments (helical) span residues 1-21, 39-59, 83-103, 111-131, 149-169, 189-209, 218-238, and 246-266; these read MTYF…FLPI, QGLA…VIYF, SNLA…GLLF, LRSA…LWWV, ALFL…RSGI, FLMS…KLAM, LLST…HFFL, and MMPF…WLAL.

The protein belongs to the UppP family.

It is found in the cell inner membrane. The catalysed reaction is di-trans,octa-cis-undecaprenyl diphosphate + H2O = di-trans,octa-cis-undecaprenyl phosphate + phosphate + H(+). Its function is as follows. Catalyzes the dephosphorylation of undecaprenyl diphosphate (UPP). Confers resistance to bacitracin. The chain is Undecaprenyl-diphosphatase from Aliivibrio fischeri (strain MJ11) (Vibrio fischeri).